A 126-amino-acid chain; its full sequence is Small ribosomal subunit protein bS16 (126 aa).

The interval 87–126 (ARSNPEKALPGKRALERVAEKKQKAEDAAAAAAAEASAAE) is disordered. A compositionally biased stretch (basic and acidic residues) spans 99 to 113 (RALERVAEKKQKAED). Residues 114–126 (AAAAAAAEASAAE) are compositionally biased toward low complexity.

The protein belongs to the bacterial ribosomal protein bS16 family.

The polypeptide is Small ribosomal subunit protein bS16 (Agrobacterium fabrum (strain C58 / ATCC 33970) (Agrobacterium tumefaciens (strain C58))).